Here is a 325-residue protein sequence, read N- to C-terminus: Methionyl-tRNA formyltransferase (325 aa).

112-115 (SLLP) contacts (6S)-5,6,7,8-tetrahydrofolate.

The protein belongs to the Fmt family.

It catalyses the reaction L-methionyl-tRNA(fMet) + (6R)-10-formyltetrahydrofolate = N-formyl-L-methionyl-tRNA(fMet) + (6S)-5,6,7,8-tetrahydrofolate + H(+). Its function is as follows. Attaches a formyl group to the free amino group of methionyl-tRNA(fMet). The formyl group appears to play a dual role in the initiator identity of N-formylmethionyl-tRNA by promoting its recognition by IF2 and preventing the misappropriation of this tRNA by the elongation apparatus. The sequence is that of Methionyl-tRNA formyltransferase from Roseiflexus sp. (strain RS-1).